We begin with the raw amino-acid sequence, 896 residues long: DNA mismatch repair protein MutS (896 aa).

Position 599-606 (599-606) interacts with ATP; that stretch reads GPNMAGKS.

Belongs to the DNA mismatch repair MutS family.

Functionally, this protein is involved in the repair of mismatches in DNA. It is possible that it carries out the mismatch recognition step. This protein has a weak ATPase activity. In Geobacillus kaustophilus (strain HTA426), this protein is DNA mismatch repair protein MutS.